We begin with the raw amino-acid sequence, 25 residues long: Secapin-1 (25 aa).

Cysteine 9 and cysteine 20 are oxidised to a cystine.

Expressed by the venom gland.

It localises to the secreted. In terms of biological role, serine protease inhibitor which exhibits antifibrinolytic, antielastolytic and antimicrobial activities. Displays antimicrobial activity against bacteria and fungi. Likely functions in the innate immune response to microbial infection and possibly in the venom, as an antifibrinolytic agent. The protein is Secapin-1 of Apis mellifera (Honeybee).